A 228-amino-acid polypeptide reads, in one-letter code: DNA repair and recombination protein RadB (228 aa).

This sequence belongs to the eukaryotic RecA-like protein family. RadB subfamily.

Its function is as follows. Involved in DNA repair and in homologous recombination. May regulate the cleavage reactions of the branch-structured DNA. Has a very weak ATPase activity that is not stimulated by DNA. Binds DNA but does not promote DNA strands exchange. In Thermococcus sibiricus (strain DSM 12597 / MM 739), this protein is DNA repair and recombination protein RadB.